The chain runs to 380 residues: N-acetylcysteine deacetylase (380 aa).

5 residues coordinate Ni(2+): C98, H100, E134, H158, and H350.

The protein belongs to the peptidase M20 family. The cofactor is a divalent metal cation.

It catalyses the reaction N-acetyl-L-cysteine + H2O = L-cysteine + acetate. Its pathway is amino-acid biosynthesis; L-cysteine biosynthesis. Its function is as follows. Probably catalyzes the deacetylation of N-acetylcysteine (NAC) to acetate and cysteine. Is involved in a S-(2-succino)cysteine (2SC) degradation pathway that allows B.subtilis to grow on 2SC as a sole sulfur source, via its metabolization to cysteine. The chain is N-acetylcysteine deacetylase from Bacillus subtilis (strain 168).